We begin with the raw amino-acid sequence, 281 residues long: 4-diphosphocytidyl-2-C-methyl-D-erythritol kinase (281 aa).

The active site involves K11. Residue 92-102 (LVSAGLAGGSA) participates in ATP binding. D132 is an active-site residue.

Belongs to the GHMP kinase family. IspE subfamily.

It catalyses the reaction 4-CDP-2-C-methyl-D-erythritol + ATP = 4-CDP-2-C-methyl-D-erythritol 2-phosphate + ADP + H(+). It participates in isoprenoid biosynthesis; isopentenyl diphosphate biosynthesis via DXP pathway; isopentenyl diphosphate from 1-deoxy-D-xylulose 5-phosphate: step 3/6. Catalyzes the phosphorylation of the position 2 hydroxy group of 4-diphosphocytidyl-2C-methyl-D-erythritol. This Ehrlichia ruminantium (strain Gardel) protein is 4-diphosphocytidyl-2-C-methyl-D-erythritol kinase.